The following is a 398-amino-acid chain: Probable aminomethyltransferase (398 aa).

This sequence belongs to the GcvT family. In terms of assembly, the glycine cleavage system is composed of four proteins: P, T, L and H.

It carries out the reaction N(6)-[(R)-S(8)-aminomethyldihydrolipoyl]-L-lysyl-[protein] + (6S)-5,6,7,8-tetrahydrofolate = N(6)-[(R)-dihydrolipoyl]-L-lysyl-[protein] + (6R)-5,10-methylene-5,6,7,8-tetrahydrofolate + NH4(+). The glycine cleavage system catalyzes the degradation of glycine. The polypeptide is Probable aminomethyltransferase (Thermococcus kodakarensis (strain ATCC BAA-918 / JCM 12380 / KOD1) (Pyrococcus kodakaraensis (strain KOD1))).